The chain runs to 248 residues: NH(3)-dependent NAD(+) synthetase (248 aa).

31 to 38 lines the ATP pocket; it reads GVSGGVDS. A Mg(2+)-binding site is contributed by Asp-37. Arg-114 lines the deamido-NAD(+) pocket. Thr-134 is a binding site for ATP. Glu-139 is a binding site for Mg(2+). Deamido-NAD(+) is bound by residues Lys-147 and Asp-154. Positions 163 and 185 each coordinate ATP. 236–237 is a deamido-NAD(+) binding site; that stretch reads HK.

This sequence belongs to the NAD synthetase family. Homodimer.

The enzyme catalyses deamido-NAD(+) + NH4(+) + ATP = AMP + diphosphate + NAD(+) + H(+). The protein operates within cofactor biosynthesis; NAD(+) biosynthesis; NAD(+) from deamido-NAD(+) (ammonia route): step 1/1. In terms of biological role, catalyzes the ATP-dependent amidation of deamido-NAD to form NAD. Uses ammonia as a nitrogen source. The polypeptide is NH(3)-dependent NAD(+) synthetase (Methanoregula boonei (strain DSM 21154 / JCM 14090 / 6A8)).